Reading from the N-terminus, the 415-residue chain is Gamma-glutamyl phosphate reductase (415 aa).

Belongs to the gamma-glutamyl phosphate reductase family.

It is found in the cytoplasm. It catalyses the reaction L-glutamate 5-semialdehyde + phosphate + NADP(+) = L-glutamyl 5-phosphate + NADPH + H(+). Its pathway is amino-acid biosynthesis; L-proline biosynthesis; L-glutamate 5-semialdehyde from L-glutamate: step 2/2. Its function is as follows. Catalyzes the NADPH-dependent reduction of L-glutamate 5-phosphate into L-glutamate 5-semialdehyde and phosphate. The product spontaneously undergoes cyclization to form 1-pyrroline-5-carboxylate. This is Gamma-glutamyl phosphate reductase from Pseudoalteromonas translucida (strain TAC 125).